The following is a 408-amino-acid chain: Guanine nucleotide-binding protein alpha-14 subunit (408 aa).

GTP contacts are provided by residues 38–45, 78–85, 201–205, 216–222, 241–245, 285–288, 325–328, and alanine 380; these read HSEELEAK, GGPSSGKS, NRISK, VHSRKAT, DVGGQ, FPNF, and NKVD. Positions 70–408 constitute a G-alpha domain; sequence SHIKILILGG…KANSKATGLS (339 aa). The G1 motif stretch occupies residues 73-86; sequence KILILGGPSSGKST. Position 85 (serine 85) interacts with Mg(2+). The interval 214-222 is G2 motif; sequence DIVHSRKAT. Threonine 222 contributes to the Mg(2+) binding site. A G3 motif region spans residues 237 to 246; that stretch reads LLMVDVGGQR. The G4 motif stretch occupies residues 321–328; the sequence is LLFFNKVD. The segment at 378 to 383 is G5 motif; the sequence is TTATNT.

This sequence belongs to the G-alpha family. As to quaternary structure, g proteins are composed of 3 units; alpha, beta and gamma. The alpha chain contains the guanine nucleotide binding site.

Functionally, guanine nucleotide-binding proteins (G proteins) are involved as modulators or transducers in various transmembrane signaling systems. In Caenorhabditis briggsae, this protein is Guanine nucleotide-binding protein alpha-14 subunit (gpa-14).